Reading from the N-terminus, the 561-residue chain is Oligo-1,6-glucosidase 1 (561 aa).

5 residues coordinate Ca(2+): D20, N22, D24, F26, and D28. The active-site Nucleophile is the D199. Catalysis depends on E255, which acts as the Proton donor.

Belongs to the glycosyl hydrolase 13 family.

The protein resides in the cytoplasm. The catalysed reaction is Hydrolysis of (1-&gt;6)-alpha-D-glucosidic linkages in some oligosaccharides produced from starch and glycogen by alpha-amylase, and in isomaltose.. In terms of biological role, hydrolyzes various disaccharides such as sucrose, maltose, and isomaltose with different efficiencies. Also hydrolyzes longer maltodextrins from maltotriose up to maltohexaose, but not maltoheptaose, palatinose, isomaltotriose, or isomaltotetraose. The protein is Oligo-1,6-glucosidase 1 (malL) of Bacillus subtilis (strain 168).